A 172-amino-acid polypeptide reads, in one-letter code: Shikimate kinase (172 aa).

14–19 serves as a coordination point for ATP; the sequence is GAGKST. S18 provides a ligand contact to Mg(2+). Substrate is bound by residues D36, R60, and G82. Residue R120 coordinates ATP. R139 contacts substrate. Residue Q156 participates in ATP binding.

Belongs to the shikimate kinase family. In terms of assembly, monomer. It depends on Mg(2+) as a cofactor.

It is found in the cytoplasm. The catalysed reaction is shikimate + ATP = 3-phosphoshikimate + ADP + H(+). The protein operates within metabolic intermediate biosynthesis; chorismate biosynthesis; chorismate from D-erythrose 4-phosphate and phosphoenolpyruvate: step 5/7. In terms of biological role, catalyzes the specific phosphorylation of the 3-hydroxyl group of shikimic acid using ATP as a cosubstrate. The sequence is that of Shikimate kinase from Aliivibrio salmonicida (strain LFI1238) (Vibrio salmonicida (strain LFI1238)).